The chain runs to 606 residues: Phosphogluconate dehydratase (606 aa).

[4Fe-4S] cluster is bound by residues C156 and C223.

It belongs to the IlvD/Edd family. [4Fe-4S] cluster serves as cofactor.

It catalyses the reaction 6-phospho-D-gluconate = 2-dehydro-3-deoxy-6-phospho-D-gluconate + H2O. Its pathway is carbohydrate metabolism; Entner-Doudoroff pathway. Functionally, catalyzes the dehydration of 6-phospho-D-gluconate to 2-dehydro-3-deoxy-6-phospho-D-gluconate. The protein is Phosphogluconate dehydratase of Rhizobium meliloti (strain 1021) (Ensifer meliloti).